The following is a 598-amino-acid chain: Probable transporter mch1 (598 aa).

The interval 1–49 (MASPTPAPRPDQISASTPLLQSDSTSSCASSIRSLSPSRRRHRNGRTSP) is disordered. Residues 22-37 (SDSTSSCASSIRSLSP) show a composition bias toward low complexity. Asn57 carries an N-linked (GlcNAc...) asparagine glycan. 6 consecutive transmembrane segments (helical) span residues 63 to 83 (ALLS…GHIF), 96 to 116 (GLSS…GYMC), 122 to 142 (GPLS…AAGV), 164 to 184 (LAYA…CSMY), 202 to 222 (GLAL…QSQL), and 241 to 261 (VFHF…LGTF). Positions 315 to 334 (AGILDPSKPDNDSDSEEEDD) are disordered. The N-linked (GlcNAc...) asparagine glycan is linked to Asn325. Transmembrane regions (helical) follow at residues 355-375 (HTMW…EAFI), 405-425 (IVGI…DLLA), 453-473 (FLLF…SGWI), 486-506 (LVGA…TVIW), 516-536 (GIVA…YSAV), and 565-585 (SAFW…LWAW).

It belongs to the major facilitator superfamily.

It localises to the vacuole membrane. Its function is as follows. Probable transporter. The protein is Probable transporter mch1 (mch1) of Neurospora crassa (strain ATCC 24698 / 74-OR23-1A / CBS 708.71 / DSM 1257 / FGSC 987).